Here is a 300-residue protein sequence, read N- to C-terminus: Phosphatidylglycerol--prolipoprotein diacylglyceryl transferase (300 aa).

A run of 7 helical transmembrane segments spans residues 17-37 (LAIR…LWFG), 59-79 (MLFY…VLFY), 94-114 (VWEG…AMML), 129-149 (FIAP…FING), 204-224 (SQIY…WLYA), 230-250 (MGAV…AAEF), and 265-285 (LSMG…MLVW). Arg-142 contacts a 1,2-diacyl-sn-glycero-3-phospho-(1'-sn-glycerol).

It belongs to the Lgt family.

It is found in the cell inner membrane. It carries out the reaction L-cysteinyl-[prolipoprotein] + a 1,2-diacyl-sn-glycero-3-phospho-(1'-sn-glycerol) = an S-1,2-diacyl-sn-glyceryl-L-cysteinyl-[prolipoprotein] + sn-glycerol 1-phosphate + H(+). It participates in protein modification; lipoprotein biosynthesis (diacylglyceryl transfer). Catalyzes the transfer of the diacylglyceryl group from phosphatidylglycerol to the sulfhydryl group of the N-terminal cysteine of a prolipoprotein, the first step in the formation of mature lipoproteins. This chain is Phosphatidylglycerol--prolipoprotein diacylglyceryl transferase, found in Ralstonia pickettii (strain 12J).